Here is a 215-residue protein sequence, read N- to C-terminus: Protein Thf1 (215 aa).

Positions 188–209 form a coiled coil; it reads IELVQETIAAERRKKERRQAEQ.

Belongs to the THF1 family.

Its function is as follows. May be involved in photosynthetic membrane biogenesis. This chain is Protein Thf1, found in Synechococcus sp. (strain CC9902).